Consider the following 206-residue polypeptide: Outer-membrane lipoprotein carrier protein (206 aa).

Positions 1–21 (MKKLLCAVLLSPLLYSNAVLA) are cleaved as a signal peptide.

The protein belongs to the LolA family. In terms of assembly, monomer.

The protein resides in the periplasm. Functionally, participates in the translocation of lipoproteins from the inner membrane to the outer membrane. Only forms a complex with a lipoprotein if the residue after the N-terminal Cys is not an aspartate (The Asp acts as a targeting signal to indicate that the lipoprotein should stay in the inner membrane). The sequence is that of Outer-membrane lipoprotein carrier protein from Shewanella sp. (strain ANA-3).